Here is a 498-residue protein sequence, read N- to C-terminus: 3-octaprenyl-4-hydroxybenzoate carboxy-lyase (498 aa).

Asparagine 176 lines the Mn(2+) pocket. Prenylated FMN is bound by residues 179–181 (IYR), 193–195 (RWL), and 198–199 (RG). Glutamate 242 is a binding site for Mn(2+). Aspartate 291 (proton donor) is an active-site residue.

This sequence belongs to the UbiD family. Homohexamer. Prenylated FMN is required as a cofactor. Mn(2+) serves as cofactor.

The protein localises to the cell membrane. The catalysed reaction is a 4-hydroxy-3-(all-trans-polyprenyl)benzoate + H(+) = a 2-(all-trans-polyprenyl)phenol + CO2. Its pathway is cofactor biosynthesis; ubiquinone biosynthesis. Catalyzes the decarboxylation of 3-octaprenyl-4-hydroxy benzoate to 2-octaprenylphenol, an intermediate step in ubiquinone biosynthesis. The protein is 3-octaprenyl-4-hydroxybenzoate carboxy-lyase of Escherichia coli O6:K15:H31 (strain 536 / UPEC).